Reading from the N-terminus, the 197-residue chain is Holliday junction branch migration complex subunit RuvA (197 aa).

A domain I region spans residues 1–63 (MISSLRGEVL…EDSMTLYGFV (63 aa)). The tract at residues 64-139 (DGETRDLFLT…KVGPAGSAAT (76 aa)) is domain II. The tract at residues 139-143 (TAPAV) is flexible linker. The segment at 144-197 (NGHTVRAPVVEALVGLGFAAKQAEEATDKVLAGDGEATTSSALRAALSLLGKAR) is domain III.

This sequence belongs to the RuvA family. Homotetramer. Forms an RuvA(8)-RuvB(12)-Holliday junction (HJ) complex. HJ DNA is sandwiched between 2 RuvA tetramers; dsDNA enters through RuvA and exits via RuvB. An RuvB hexamer assembles on each DNA strand where it exits the tetramer. Each RuvB hexamer is contacted by two RuvA subunits (via domain III) on 2 adjacent RuvB subunits; this complex drives branch migration. In the full resolvosome a probable DNA-RuvA(4)-RuvB(12)-RuvC(2) complex forms which resolves the HJ.

It localises to the cytoplasm. Its function is as follows. The RuvA-RuvB-RuvC complex processes Holliday junction (HJ) DNA during genetic recombination and DNA repair, while the RuvA-RuvB complex plays an important role in the rescue of blocked DNA replication forks via replication fork reversal (RFR). RuvA specifically binds to HJ cruciform DNA, conferring on it an open structure. The RuvB hexamer acts as an ATP-dependent pump, pulling dsDNA into and through the RuvAB complex. HJ branch migration allows RuvC to scan DNA until it finds its consensus sequence, where it cleaves and resolves the cruciform DNA. The polypeptide is Holliday junction branch migration complex subunit RuvA (Mycobacterium marinum (strain ATCC BAA-535 / M)).